Consider the following 199-residue polypeptide: Imidazoleglycerol-phosphate dehydratase (199 aa).

Belongs to the imidazoleglycerol-phosphate dehydratase family.

The protein resides in the cytoplasm. It catalyses the reaction D-erythro-1-(imidazol-4-yl)glycerol 3-phosphate = 3-(imidazol-4-yl)-2-oxopropyl phosphate + H2O. It participates in amino-acid biosynthesis; L-histidine biosynthesis; L-histidine from 5-phospho-alpha-D-ribose 1-diphosphate: step 6/9. This Bifidobacterium longum (strain NCC 2705) protein is Imidazoleglycerol-phosphate dehydratase.